Here is a 346-residue protein sequence, read N- to C-terminus: MSGNNSSLSYKDAGVDIDAGNALVDRIKGAVKRTRRPEVMGGIGGFGALCELPTKYKQPVLVSGTDGVGTKLRLALDMNKHDTIGIDLVAMCVNDLIVQGAEPLFFLDYYATGKLDVDTAADVVSGIADGCVQAGCALIGGETAEMPGMYEGEDYDVAGFCVGVVEKEDVIDGTKVAAGDALIAVGSSGPHSNGYSLIRKILEVSGADKNEELAGRTIGEHLLEPTKIYIKSALKMIEKHDIHAISHITGGGFWENIPRVLPEGTKAVIDGNSWEWPIIFKWLQEKGNVETHEMYRTFNCGVGLVVALPKDQADAAVALLKEEGENAWVIGEIAQAEANEEQVEIN.

The protein belongs to the AIR synthase family.

Its subcellular location is the cytoplasm. The catalysed reaction is 2-formamido-N(1)-(5-O-phospho-beta-D-ribosyl)acetamidine + ATP = 5-amino-1-(5-phospho-beta-D-ribosyl)imidazole + ADP + phosphate + H(+). It participates in purine metabolism; IMP biosynthesis via de novo pathway; 5-amino-1-(5-phospho-D-ribosyl)imidazole from N(2)-formyl-N(1)-(5-phospho-D-ribosyl)glycinamide: step 2/2. The protein is Phosphoribosylformylglycinamidine cyclo-ligase of Vibrio parahaemolyticus serotype O3:K6 (strain RIMD 2210633).